A 609-amino-acid polypeptide reads, in one-letter code: Glutamine--fructose-6-phosphate aminotransferase [isomerizing] (609 aa).

Catalysis depends on Cys-2, which acts as the Nucleophile; for GATase activity. The Glutamine amidotransferase type-2 domain occupies 2 to 219 (CGIFGYIGAK…SGELAVVGLG (218 aa)). 2 SIS domains span residues 280 to 426 (ISEK…LKQT) and 458 to 599 (WAND…IDRP). Lys-604 acts as the For Fru-6P isomerization activity in catalysis.

In terms of assembly, homodimer.

It localises to the cytoplasm. It carries out the reaction D-fructose 6-phosphate + L-glutamine = D-glucosamine 6-phosphate + L-glutamate. Catalyzes the first step in hexosamine metabolism, converting fructose-6P into glucosamine-6P using glutamine as a nitrogen source. This chain is Glutamine--fructose-6-phosphate aminotransferase [isomerizing], found in Chlamydia caviae (strain ATCC VR-813 / DSM 19441 / 03DC25 / GPIC) (Chlamydophila caviae).